The following is a 313-amino-acid chain: HPr kinase/phosphorylase (313 aa).

Residues His-140 and Lys-161 contribute to the active site. An ATP-binding site is contributed by 155 to 162; sequence GDSGVGKS. Ser-162 is a Mg(2+) binding site. Asp-179 functions as the Proton acceptor; for phosphorylation activity. Proton donor; for dephosphorylation activity in the catalytic mechanism. An important for the catalytic mechanism of both phosphorylation and dephosphorylation region spans residues 203–212; it reads LEIRGIGIID. A Mg(2+)-binding site is contributed by Glu-204. The active site involves Arg-245. The interval 266-271 is important for the catalytic mechanism of dephosphorylation; sequence PVKVGR.

Belongs to the HPrK/P family. In terms of assembly, homohexamer. It depends on Mg(2+) as a cofactor.

The catalysed reaction is [HPr protein]-L-serine + ATP = [HPr protein]-O-phospho-L-serine + ADP + H(+). The enzyme catalyses [HPr protein]-O-phospho-L-serine + phosphate + H(+) = [HPr protein]-L-serine + diphosphate. Catalyzes the ATP- as well as the pyrophosphate-dependent phosphorylation of a specific serine residue in HPr, a phosphocarrier protein of the phosphoenolpyruvate-dependent sugar phosphotransferase system (PTS). HprK/P also catalyzes the pyrophosphate-producing, inorganic phosphate-dependent dephosphorylation (phosphorolysis) of seryl-phosphorylated HPr (P-Ser-HPr). The two antagonistic activities of HprK/P are regulated by several intracellular metabolites, which change their concentration in response to the absence or presence of rapidly metabolisable carbon sources (glucose, fructose, etc.) in the growth medium. Therefore, by controlling the phosphorylation state of HPr, HPrK/P is a sensor enzyme that plays a major role in the regulation of carbon metabolism and sugar transport: it mediates carbon catabolite repression (CCR), and regulates PTS-catalyzed carbohydrate uptake and inducer exclusion. In Latilactobacillus sakei subsp. sakei (strain 23K) (Lactobacillus sakei subsp. sakei), this protein is HPr kinase/phosphorylase.